We begin with the raw amino-acid sequence, 508 residues long: Photosystem II CP47 reaction center protein (508 aa).

6 helical membrane-spanning segments follow: residues 21-36 (SVHI…WAGS), 101-115 (IVFS…IWHW), 140-156 (GIHL…FGAF), 203-218 (IAAG…FHLS), 237-252 (VLSS…AFVV), and 457-472 (SFAL…HGAR).

This sequence belongs to the PsbB/PsbC family. PsbB subfamily. PSII is composed of 1 copy each of membrane proteins PsbA, PsbB, PsbC, PsbD, PsbE, PsbF, PsbH, PsbI, PsbJ, PsbK, PsbL, PsbM, PsbT, PsbX, PsbY, PsbZ, Psb30/Ycf12, at least 3 peripheral proteins of the oxygen-evolving complex and a large number of cofactors. It forms dimeric complexes. Binds multiple chlorophylls. PSII binds additional chlorophylls, carotenoids and specific lipids. serves as cofactor.

The protein resides in the plastid. Its subcellular location is the chloroplast thylakoid membrane. Functionally, one of the components of the core complex of photosystem II (PSII). It binds chlorophyll and helps catalyze the primary light-induced photochemical processes of PSII. PSII is a light-driven water:plastoquinone oxidoreductase, using light energy to abstract electrons from H(2)O, generating O(2) and a proton gradient subsequently used for ATP formation. The protein is Photosystem II CP47 reaction center protein of Lactuca sativa (Garden lettuce).